Reading from the N-terminus, the 883-residue chain is Glutamate receptor 2 (883 aa).

An N-terminal signal peptide occupies residues 1–24 (MQKIMHISVLLSPVLWGLIFGVSS). Residues 25–543 (NSIQIGGLFP…GVFSFLDPLA (519 aa)) are Extracellular-facing. Residues cysteine 78 and cysteine 330 are joined by a disulfide bond. N-linked (GlcNAc...) asparagine glycans are attached at residues asparagine 256, asparagine 370, asparagine 406, and asparagine 413. Residues proline 499, threonine 501, and arginine 506 each coordinate L-glutamate. The chain crosses the membrane as a helical span at residues 544–564 (YEIWMCIVFAYIGVSVVLFLV). The Cytoplasmic segment spans residues 565-591 (SRFSPYEWHTEEFEDGRETQSSESTNE). Positions 592–607 (FGIFNSLWFSLGAFMQ) form an intramembrane region, helical; Pore-forming. An intramembrane segment occupies 608–610 (QGC). A lipid anchor (S-palmitoyl cysteine) is attached at cysteine 610. Residues 611 to 616 (DISPRS) are Cytoplasmic-facing. Residues 617-637 (LSGRIVGGVWWFFTLIIISSY) form a helical membrane-spanning segment. Residues 638 to 812 (TANLAAFLTV…EKTSALSLSN (175 aa)) lie on the Extracellular side of the membrane. L-glutamate is bound by residues serine 675 and threonine 676. Serine 683 is subject to Phosphoserine; by PKC. Phosphoserine; by PKG is present on serine 717. Glutamate 726 contributes to the L-glutamate binding site. Cysteine 739 and cysteine 794 are oxidised to a cystine. Residues 813 to 833 (VAGVFYILVGGLGLAMLVALI) traverse the membrane as a helical segment. The Cytoplasmic segment spans residues 834 to 883 (EFCYKSRAEAKRMKVAKNAQNINPSSSQNSQNFATYKEGYNVYGIESVKI). Residue cysteine 836 is the site of S-palmitoyl cysteine attachment. Serine 860 and serine 863 each carry phosphoserine. The segment at 867–877 (ATYKEGYNVYG) is required for interaction with IQSEC1. The residue at position 876 (tyrosine 876) is a Phosphotyrosine. The residue at position 880 (serine 880) is a Phosphoserine.

This sequence belongs to the glutamate-gated ion channel (TC 1.A.10.1) family. GRIA2 subfamily. Homotetramer or heterotetramer of pore-forming glutamate receptor subunits. Tetramers may be formed by the dimerization of dimers. May interact with MPP4. Forms a ternary complex with GRIP1 and CSPG4. Interacts with ATAD1 in an ATP-dependent manner. ATAD1-catalyzed ATP hydrolysis disrupts binding to ATAD1 and to GRIP1 and leads to AMPAR complex disassembly. Interacts with GRIP1 and GRIP2. Interacts with NSF via its C-terminus. Isoform 1, but not isoform 3, interacts with PICK1. Interacts with CACNG2. Interacts with GRIA1 and SYNDIG1. Part of a complex containing GRIA2, NSF and NAPA and/or NAPB. Interacts with SNX27 (via PDZ domain); the interaction is required for recycling to the plasma membrane when endocytosed and prevent degradation in lysosomes. Interacts with LRFN1. Found in a complex with GRIA1, GRIA3, GRIA4, CNIH2, CNIH3, CACNG2, CACNG3, CACNG4, CACNG5, CACNG7 and CACNG8. Interacts with CACNG5. Interacts with OLFM2. Interacts with AP4B1, AP4E1 and AP4M1; probably indirect it mediates the somatodendritic localization of GRIA2 in neurons. Forms a complex with GRIP1, NSG1 and STX12; controls the intracellular fate of AMPAR and the endosomal sorting of the GRIA2 subunit toward recycling and membrane targeting. Interacts with IQSEC1; the interaction is required for ARF6 activation. Interacts (heterotetramer form) with CNIH2 and CNIH3; this interaction promotes expression at the plasma membrane and extensively modulates their gating properties by slowing deactivation and desensitization kinetics. Palmitoylated. Depalmitoylated upon L-glutamate stimulation. ZDHHC3/GODZ specifically palmitoylates Cys-610, which leads to Golgi retention and decreased cell surface expression. In contrast, Cys-836 palmitoylation does not affect cell surface expression but regulates stimulation-dependent endocytosis. In terms of processing, N-glycosylated. Post-translationally, ubiquitinated by RNF167, leading to its degradation. Phosphorylation at Tyr-876 is required for interaction with IQSEC1 and ARF6 activation, which in turn triggers AMPAR internalization for persistent synaptic depression. As to expression, detected in brain cortex, hippocampus and cerebellum (at protein level). Detected in hippocampus.

It localises to the cell membrane. It is found in the postsynaptic cell membrane. The protein localises to the postsynaptic density membrane. It catalyses the reaction Ca(2+)(in) = Ca(2+)(out). It carries out the reaction Na(+)(in) = Na(+)(out). In terms of biological role, ionotropic glutamate receptor that functions as a ligand-gated cation channel, gated by L-glutamate and glutamatergic agonists such as alpha-amino-3-hydroxy-5-methyl-4-isoxazolepropionic acid (AMPA), quisqualic acid, and kainic acid. L-glutamate acts as an excitatory neurotransmitter at many synapses in the central nervous system and plays an important role in fast excitatory synaptic transmission. Binding of the excitatory neurotransmitter L-glutamate induces a conformation change, leading to the opening of the cation channel, and thereby converts the chemical signal to an electrical impulse upon entry of monovalent and divalent cations such as sodium and calcium. The receptor then desensitizes rapidly and enters in a transient inactive state, characterized by the presence of bound agonist. In the presence of CACNG4 or CACNG7 or CACNG8, shows resensitization which is characterized by a delayed accumulation of current flux upon continued application of L-glutamate. Through complex formation with NSG1, GRIP1 and STX12 controls the intracellular fate of AMPAR and the endosomal sorting of the GRIA2 subunit toward recycling and membrane targeting. In Mus musculus (Mouse), this protein is Glutamate receptor 2.